Consider the following 198-residue polypeptide: Dephospho-CoA kinase (198 aa).

In terms of domain architecture, DPCK spans 3 to 198 (LIGLTGGIAS…VDALWAGLRG (196 aa)). Residue 11-16 (ASGKST) coordinates ATP.

It belongs to the CoaE family.

The protein localises to the cytoplasm. It catalyses the reaction 3'-dephospho-CoA + ATP = ADP + CoA + H(+). The protein operates within cofactor biosynthesis; coenzyme A biosynthesis; CoA from (R)-pantothenate: step 5/5. Catalyzes the phosphorylation of the 3'-hydroxyl group of dephosphocoenzyme A to form coenzyme A. This Leifsonia xyli subsp. xyli (strain CTCB07) protein is Dephospho-CoA kinase.